Reading from the N-terminus, the 189-residue chain is UPF0301 protein PputW619_0469 (189 aa).

It belongs to the UPF0301 (AlgH) family.

The sequence is that of UPF0301 protein PputW619_0469 from Pseudomonas putida (strain W619).